Consider the following 97-residue polypeptide: MTKKKRENLGVAQEIDGLEEKLSRCRKDLEAVTSQLYRAELSPEDRRSLEKEKHTLMNKASKYEKELKLLRHENRKNTLLSVAIFTVFALLYAYWTM.

A coiled-coil region spans residues 2–78 (TKKKRENLGV…LLRHENRKNT (77 aa)). The chain crosses the membrane as a helical span at residues 78 to 95 (TLLSVAIFTVFALLYAYW).

It localises to the membrane. The polypeptide is Coiled-coil domain-containing protein 167 (Ccdc167) (Mus musculus (Mouse)).